The primary structure comprises 545 residues: E3 ubiquitin-protein ligase ipaH9.8 (545 aa).

An interaction with target proteins region spans residues 1–242 (MLPINNNFSL…YHGPRIYFSM (242 aa)). LRR repeat units follow at residues 57 to 77 (NSDELRLDRLNLSSLPDNLPA), 78 to 99 (QITLLNVSYNQLTNLPELPVTL), 100 to 117 (KKLYSASNKLSELPVLPP), 118 to 139 (ALESLQVQHNELENLPALPDSL), 140 to 157 (LTMNISYNEIVSLPSLPQ), 158 to 179 (ALKNLRATRNFLTELPAFSEGN), 182 to 203 (VVREYFFDRNQISHIPESILNL), and 205 to 228 (NECSIHISDNPLSSHALQALQRLT). Residues 243 to 250 (SDGQQNTL) form a linker region. The interval 251–545 (HRPLADAVTA…SENGSQLHHS (295 aa)) is E3 ubiquitin-protein ligase catalytic domain. An NEL domain is found at 253 to 545 (PLADAVTAWF…SENGSQLHHS (293 aa)). Catalysis depends on cysteine 337, which acts as the Glycyl thioester intermediate.

The protein belongs to the LRR-containing bacterial E3 ligase family. Also interacts with human and mouse U2AF1 (U2AF35). Ubiquitinated in the presence of host E1 ubiquitin-activating enzyme, E2 ubiquitin-conjugating enzyme and ubiquitin.

It localises to the secreted. The protein localises to the host cytoplasm. The protein resides in the host nucleus. It carries out the reaction S-ubiquitinyl-[E2 ubiquitin-conjugating enzyme]-L-cysteine + [acceptor protein]-L-lysine = [E2 ubiquitin-conjugating enzyme]-L-cysteine + N(6)-ubiquitinyl-[acceptor protein]-L-lysine.. With respect to regulation, exists in an autoinhibited state in the absence of substrate protein, due to interactions of the leucine-rich repeats with NEL domain. Is activated upon binding to a substrate protein. Its function is as follows. Effector E3 ubiquitin ligase that interferes with host's ubiquitination pathway and modulates the acute inflammatory responses, thus facilitating bacterial colonization within the host cell. Interacts with IKBKG (NEMO) and TNIP1 (ABIN-1), a ubiquitin-binding adapter protein, which results in TNIP1-dependent 'Lys-27'-linked polyubiquitination of IKBKG. Consequently, polyubiquitinated IKBKG undergoes proteasome-dependent degradation, which perturbs NF-kappa-B activation during bacterial infection. Mediates polyubiquitination of host U2AF1, leading to its proteasomal degradation. Catalyzes 'Lys-48'-linked polyubiquitination and subsequent degradation of a subset of host guanylate-binding proteins (GBP1, GBP2, GBP4 and GBP6), thereby suppressing host cell defense. In contrast, host GBP3 and GBP7 are not ubiquitinated by IpaH9.8. Uses UBE2D2 (UBCH5B) as an E2 ubiquitin-conjugating enzyme. The polypeptide is E3 ubiquitin-protein ligase ipaH9.8 (ipaH9.8) (Shigella boydii serotype 18 (strain CDC 3083-94 / BS512)).